We begin with the raw amino-acid sequence, 178 residues long: Oligoribonuclease (178 aa).

The Exonuclease domain occupies 7–168 (LIWIDLEMTG…DDIRESIAEL (162 aa)). Tyrosine 128 is an active-site residue.

The protein belongs to the oligoribonuclease family.

Its subcellular location is the cytoplasm. 3'-to-5' exoribonuclease specific for small oligoribonucleotides. This Francisella tularensis subsp. holarctica (strain OSU18) protein is Oligoribonuclease.